Reading from the N-terminus, the 282-residue chain is tRNA pseudouridine synthase A (282 aa).

Aspartate 51 (nucleophile) is an active-site residue. A substrate-binding site is contributed by tyrosine 109.

The protein belongs to the tRNA pseudouridine synthase TruA family. As to quaternary structure, homodimer.

It carries out the reaction uridine(38/39/40) in tRNA = pseudouridine(38/39/40) in tRNA. Functionally, formation of pseudouridine at positions 38, 39 and 40 in the anticodon stem and loop of transfer RNAs. The polypeptide is tRNA pseudouridine synthase A (Delftia acidovorans (strain DSM 14801 / SPH-1)).